A 316-amino-acid chain; its full sequence is Probable cell division protein WhiA (316 aa).

Positions 276 to 309 (SLEELGKIAEPQITKDAIAGRIRRLLQLAEKTEK) form a DNA-binding region, H-T-H motif.

Belongs to the WhiA family.

Involved in cell division and chromosome segregation. This is Probable cell division protein WhiA from Bifidobacterium longum (strain NCC 2705).